The primary structure comprises 277 residues: Large ribosomal subunit protein uL2 (277 aa).

The segment at 220 to 277 (VRGSVMNPNDHPHGGGEGKAPIGRPSPMSPWGKKTLGKKTRSSKARSEKLIIRHRKSR) is disordered. Residues 254 to 263 (TLGKKTRSSK) show a composition bias toward basic residues.

This sequence belongs to the universal ribosomal protein uL2 family. As to quaternary structure, part of the 50S ribosomal subunit. Forms a bridge to the 30S subunit in the 70S ribosome.

In terms of biological role, one of the primary rRNA binding proteins. Required for association of the 30S and 50S subunits to form the 70S ribosome, for tRNA binding and peptide bond formation. It has been suggested to have peptidyltransferase activity; this is somewhat controversial. Makes several contacts with the 16S rRNA in the 70S ribosome. The protein is Large ribosomal subunit protein uL2 of Latilactobacillus sakei subsp. sakei (strain 23K) (Lactobacillus sakei subsp. sakei).